Reading from the N-terminus, the 296-residue chain is Phosphatidylglycerol--prolipoprotein diacylglyceryl transferase (296 aa).

The next 3 helical transmembrane spans lie at 17–37 (LAVR…IVVG), 59–79 (MMFY…VLFY), and 97–117 (GGMS…LFAW). Arginine 142 lines the a 1,2-diacyl-sn-glycero-3-phospho-(1'-sn-glycerol) pocket. 2 helical membrane-spanning segments follow: residues 230-250 (MGAI…TVEF) and 265-285 (LSMG…MMIW).

Belongs to the Lgt family.

It is found in the cell inner membrane. The catalysed reaction is L-cysteinyl-[prolipoprotein] + a 1,2-diacyl-sn-glycero-3-phospho-(1'-sn-glycerol) = an S-1,2-diacyl-sn-glyceryl-L-cysteinyl-[prolipoprotein] + sn-glycerol 1-phosphate + H(+). Its pathway is protein modification; lipoprotein biosynthesis (diacylglyceryl transfer). In terms of biological role, catalyzes the transfer of the diacylglyceryl group from phosphatidylglycerol to the sulfhydryl group of the N-terminal cysteine of a prolipoprotein, the first step in the formation of mature lipoproteins. The protein is Phosphatidylglycerol--prolipoprotein diacylglyceryl transferase of Burkholderia pseudomallei (strain 668).